The sequence spans 155 residues: Small ribosomal subunit protein uS7 (155 aa).

The protein belongs to the universal ribosomal protein uS7 family. In terms of assembly, part of the 30S ribosomal subunit. Contacts proteins S9 and S11.

Functionally, one of the primary rRNA binding proteins, it binds directly to 16S rRNA where it nucleates assembly of the head domain of the 30S subunit. Is located at the subunit interface close to the decoding center, probably blocks exit of the E-site tRNA. This Xylella fastidiosa (strain M23) protein is Small ribosomal subunit protein uS7.